The following is a 525-amino-acid chain: MRFLRFLKIFFTVIRFGLDEMMLSRVNDRRVRLLLRITTIGRKFDAPPGVRLRLALESLGPIFVKFGQVLSTRRDLLPVDIADELAKLQDQVPPFESAVAIRLVENALGAPVDVLFDDFERVPVASASIAQVHFATVKAGQHAGKAVAVKVLRPNMLPVIDSDLALLRDIAVWAERLWADGKRLKPREVVAEFDKYLHDELDLMREAANGSQLRRNFAGLDLLLVPEMYWEFCTPTVLVMERMVGVPISQVETLRAAGVDIPKLAREGVEIFFTQVFRDGFFHADMHPGNIQVSLDPAHFGRYIALDFGIIGALSDFDKNYLAQNFLAFFKRDYHRVATLHLESGWVPPTTRVEELESAIRAVCEPYFDRALKDISLGQVLMRLFSTSRRFNVEIQPQLVLLQKTMLNVEGLGRSLDPELDLWKTAKPYLERWMNEQIGLRGWYERLKIEAPQWSKTLPQLPRLIHHALAERHDNKRGANDDMIRQILLEQKRTNRLLQGLLLFGVAVGVGAVLARAFLALAYGG.

Residues 118 to 500 (DFERVPVASA…QKRTNRLLQG (383 aa)) form the Protein kinase domain. ATP is bound by residues 124-132 (VASASIAQV) and Lys-150. Asp-285 acts as the Proton acceptor in catalysis. A helical membrane pass occupies residues 501–521 (LLLFGVAVGVGAVLARAFLAL).

Belongs to the ABC1 family. UbiB subfamily.

It is found in the cell inner membrane. The protein operates within cofactor biosynthesis; ubiquinone biosynthesis [regulation]. Functionally, is probably a protein kinase regulator of UbiI activity which is involved in aerobic coenzyme Q (ubiquinone) biosynthesis. This is Probable protein kinase UbiB from Paraburkholderia phytofirmans (strain DSM 17436 / LMG 22146 / PsJN) (Burkholderia phytofirmans).